A 325-amino-acid polypeptide reads, in one-letter code: Pseudouridylate synthase TRUB2, mitochondrial (325 aa).

Residue Asp-101 is the Nucleophile of the active site. Residues 292–325 (QTEGVSRGNPDREAAEGPIPGPSRGAEGEGELRA) form a disordered region.

Belongs to the pseudouridine synthase TruB family.

It localises to the mitochondrion matrix. The catalysed reaction is a uridine in mRNA = a pseudouridine in mRNA. It catalyses the reaction uridine(55) in tRNA = pseudouridine(55) in tRNA. Its function is as follows. Minor enzyme contributing to the isomerization of uridine to pseudouridine (pseudouridylation) of specific mitochondrial mRNAs (mt-mRNAs) such as COXI and COXIII mt-mRNAs, modulating the efficiency of mitochondrial protein synthesis without changes in transcript abundance or stability. Also catalyzes pseudouridylation of some tRNAs, including synthesis of pseudouridine(55) from uracil-55, in the psi GC loop of a subset of tRNAs. The polypeptide is Pseudouridylate synthase TRUB2, mitochondrial (Xenopus tropicalis (Western clawed frog)).